A 184-amino-acid polypeptide reads, in one-letter code: Photosystem I assembly protein Ycf4 (184 aa).

Helical transmembrane passes span 22-42 and 57-77; these read FCWA…GTSS and ILFF…LFIS.

Belongs to the Ycf4 family.

It is found in the plastid. It localises to the chloroplast thylakoid membrane. Seems to be required for the assembly of the photosystem I complex. The sequence is that of Photosystem I assembly protein Ycf4 from Panax ginseng (Korean ginseng).